The primary structure comprises 209 residues: Uracil phosphoribosyltransferase (209 aa).

5-phospho-alpha-D-ribose 1-diphosphate is bound by residues Arg79, Arg104, and 131-139 (DPMLATGGS). Residues Ile194 and 199–201 (GDA) each bind uracil. Asp200 lines the 5-phospho-alpha-D-ribose 1-diphosphate pocket.

Belongs to the UPRTase family. Mg(2+) is required as a cofactor.

It carries out the reaction UMP + diphosphate = 5-phospho-alpha-D-ribose 1-diphosphate + uracil. Its pathway is pyrimidine metabolism; UMP biosynthesis via salvage pathway; UMP from uracil: step 1/1. Its activity is regulated as follows. Allosterically activated by GTP. In terms of biological role, catalyzes the conversion of uracil and 5-phospho-alpha-D-ribose 1-diphosphate (PRPP) to UMP and diphosphate. The polypeptide is Uracil phosphoribosyltransferase (Streptococcus pyogenes serotype M49 (strain NZ131)).